Consider the following 358-residue polypeptide: MVDILNLTFEELETFLVEKLGEKKFRARQIWQWLWNKYVRDFDQMTNVSKQTRAQLKEHARIFWPEVVTTSKSQDGTTKFLLRLADGALVETVLIPGSQGRITQCLSCQVGCAMGCTFCATGTLGFERNMTMSEILGQVLVAREYLNDVAERPILRNLVFMGMGEPLLNLDEIMRSLHTLNSELGLQFSPRRITVSTCGVNPEGLRRLGESGLAYLAVSLHAPTQELRRTIMPKAARWELNDFIEALQSYPLKTRERITFEYLLLGGVNDSLEHAKQLVRLVSRTKAKLNLIVYNPSGDEADPYAAPTEERILAFEQYLWSKHVTAIIRKSKGADIKAACGQLKAAETGGTPCCAQND.

The active-site Proton acceptor is the Glu91. The region spanning 98–335 (SQGRITQCLS…AIIRKSKGAD (238 aa)) is the Radical SAM core domain. Cys105 and Cys340 are joined by a disulfide. The [4Fe-4S] cluster site is built by Cys112, Cys116, and Cys119. S-adenosyl-L-methionine-binding positions include 164 to 165 (GE), Ser196, 219 to 221 (SLH), and Asn295. Cys340 (S-methylcysteine intermediate) is an active-site residue.

It belongs to the radical SAM superfamily. RlmN family. [4Fe-4S] cluster is required as a cofactor.

The protein localises to the cytoplasm. The catalysed reaction is adenosine(2503) in 23S rRNA + 2 reduced [2Fe-2S]-[ferredoxin] + 2 S-adenosyl-L-methionine = 2-methyladenosine(2503) in 23S rRNA + 5'-deoxyadenosine + L-methionine + 2 oxidized [2Fe-2S]-[ferredoxin] + S-adenosyl-L-homocysteine. It carries out the reaction adenosine(37) in tRNA + 2 reduced [2Fe-2S]-[ferredoxin] + 2 S-adenosyl-L-methionine = 2-methyladenosine(37) in tRNA + 5'-deoxyadenosine + L-methionine + 2 oxidized [2Fe-2S]-[ferredoxin] + S-adenosyl-L-homocysteine. Specifically methylates position 2 of adenine 2503 in 23S rRNA and position 2 of adenine 37 in tRNAs. m2A2503 modification seems to play a crucial role in the proofreading step occurring at the peptidyl transferase center and thus would serve to optimize ribosomal fidelity. The sequence is that of Dual-specificity RNA methyltransferase RlmN from Oleidesulfovibrio alaskensis (strain ATCC BAA-1058 / DSM 17464 / G20) (Desulfovibrio alaskensis).